Here is a 526-residue protein sequence, read N- to C-terminus: Medium/long-chain-fatty-acid--[acyl-carrier-protein] ligase MbtM (526 aa).

Residues Lys-260 and Lys-511 each carry the N6-acetyllysine; by Pat modification.

It belongs to the ATP-dependent AMP-binding enzyme family. Post-translationally, acetylated on Lys-511 and Lys-260 by Pat. Lys-511 is the major acetylation site. Acetylation results in the inactivation of the enzyme.

The enzyme catalyses a long-chain fatty acid + holo-[ACP] + ATP = a long-chain fatty acyl-[ACP] + AMP + diphosphate. It carries out the reaction a medium-chain fatty acid + holo-[ACP] + ATP = a medium-chain fatty acyl-[ACP] + AMP + diphosphate. It catalyses the reaction hexadecanoate + holo-[ACP] + ATP = hexadecanoyl-[ACP] + AMP + diphosphate. The catalysed reaction is hexadecanoate + ATP + H(+) = hexadecanoyl-AMP + diphosphate. The enzyme catalyses hexadecanoyl-AMP + holo-[ACP] = hexadecanoyl-[ACP] + AMP + H(+). It carries out the reaction dodecanoate + holo-[ACP] + ATP = dodecanoyl-[ACP] + AMP + diphosphate. It catalyses the reaction dodecanoate + ATP + H(+) = dodecanoyl-AMP + diphosphate. The catalysed reaction is dodecanoyl-AMP + holo-[ACP] = dodecanoyl-[ACP] + AMP + H(+). Its pathway is siderophore biosynthesis; mycobactin biosynthesis. Its activity is regulated as follows. Reversibly inactivated by post-translational acetylation by Pat in a cAMP-dependent manner and reactivated by Sir2 deacylase. Its function is as follows. Activates lipidic moieties required for mycobactin biosynthesis. Converts medium- to long-chain aliphatic fatty acids into acyl adenylate, which is further transferred on to the phosphopantetheine arm of the carrier protein MbtL. Shows a strong preference for palmitic acid (C16) and cannot use short-chain fatty acids. Proceeds via a Bi Uni Uni Bi ping-pong mechanism. During the first half-reaction (adenylation), fatty acid binds first to the free enzyme, followed by ATP and the release of pyrophosphate to form the adenylate intermediate. During the second half-reaction (ligation), holo-MbtL binds to the enzyme followed by the release of products AMP and acylated MbtL. This is Medium/long-chain-fatty-acid--[acyl-carrier-protein] ligase MbtM from Mycolicibacterium smegmatis (strain ATCC 700084 / mc(2)155) (Mycobacterium smegmatis).